The primary structure comprises 245 residues: 1-(5-phosphoribosyl)-5-[(5-phosphoribosylamino)methylideneamino] imidazole-4-carboxamide isomerase (245 aa).

Asp7 serves as the catalytic Proton acceptor. Asp129 (proton donor) is an active-site residue.

It belongs to the HisA/HisF family.

It is found in the cytoplasm. The enzyme catalyses 1-(5-phospho-beta-D-ribosyl)-5-[(5-phospho-beta-D-ribosylamino)methylideneamino]imidazole-4-carboxamide = 5-[(5-phospho-1-deoxy-D-ribulos-1-ylimino)methylamino]-1-(5-phospho-beta-D-ribosyl)imidazole-4-carboxamide. It functions in the pathway amino-acid biosynthesis; L-histidine biosynthesis; L-histidine from 5-phospho-alpha-D-ribose 1-diphosphate: step 4/9. The protein is 1-(5-phosphoribosyl)-5-[(5-phosphoribosylamino)methylideneamino] imidazole-4-carboxamide isomerase of Shewanella amazonensis (strain ATCC BAA-1098 / SB2B).